Consider the following 156-residue polypeptide: Ribosomal RNA large subunit methyltransferase H (156 aa).

S-adenosyl-L-methionine is bound by residues L74, G105, and L124 to L129.

It belongs to the RNA methyltransferase RlmH family. As to quaternary structure, homodimer.

The protein localises to the cytoplasm. It catalyses the reaction pseudouridine(1915) in 23S rRNA + S-adenosyl-L-methionine = N(3)-methylpseudouridine(1915) in 23S rRNA + S-adenosyl-L-homocysteine + H(+). Functionally, specifically methylates the pseudouridine at position 1915 (m3Psi1915) in 23S rRNA. This is Ribosomal RNA large subunit methyltransferase H from Legionella pneumophila (strain Paris).